A 498-amino-acid polypeptide reads, in one-letter code: ATP synthase subunit beta, chloroplastic (498 aa).

172–179 (GGAGVGKT) is a binding site for ATP.

It belongs to the ATPase alpha/beta chains family. In terms of assembly, F-type ATPases have 2 components, CF(1) - the catalytic core - and CF(0) - the membrane proton channel. CF(1) has five subunits: alpha(3), beta(3), gamma(1), delta(1), epsilon(1). CF(0) has four main subunits: a(1), b(1), b'(1) and c(9-12).

It localises to the plastid. The protein localises to the chloroplast thylakoid membrane. It catalyses the reaction ATP + H2O + 4 H(+)(in) = ADP + phosphate + 5 H(+)(out). In terms of biological role, produces ATP from ADP in the presence of a proton gradient across the membrane. The catalytic sites are hosted primarily by the beta subunits. The chain is ATP synthase subunit beta, chloroplastic from Calycanthus floridus var. glaucus (Eastern sweetshrub).